A 99-amino-acid chain; its full sequence is Integration host factor subunit beta (99 aa).

The protein belongs to the bacterial histone-like protein family. In terms of assembly, heterodimer of an alpha and a beta chain.

This protein is one of the two subunits of integration host factor, a specific DNA-binding protein that functions in genetic recombination as well as in transcriptional and translational control. The protein is Integration host factor subunit beta of Rhizobium etli (strain CIAT 652).